We begin with the raw amino-acid sequence, 389 residues long: Glutamate 5-kinase (389 aa).

Lys17 contributes to the ATP binding site. The substrate site is built by Ser57, Asp144, and Asn156. 176 to 177 lines the ATP pocket; the sequence is SD. Positions 282-359 constitute a PUA domain; it reads AGEIHVDAGA…NEIETILGYV (78 aa).

This sequence belongs to the glutamate 5-kinase family.

The protein resides in the cytoplasm. It carries out the reaction L-glutamate + ATP = L-glutamyl 5-phosphate + ADP. It functions in the pathway amino-acid biosynthesis; L-proline biosynthesis; L-glutamate 5-semialdehyde from L-glutamate: step 1/2. Functionally, catalyzes the transfer of a phosphate group to glutamate to form L-glutamate 5-phosphate. The polypeptide is Glutamate 5-kinase (Agrobacterium fabrum (strain C58 / ATCC 33970) (Agrobacterium tumefaciens (strain C58))).